Reading from the N-terminus, the 443-residue chain is Putative transporter AmpG 1 (443 aa).

13 helical membrane passes run 5-25, 42-62, 78-98, 104-124, 143-163, 171-191, 230-250, 254-274, 299-319, 324-344, 354-374, 393-413, and 415-435; these read SHIYIIWLFGFISGFNVMITG, IGMLSFITLPYSINFLLAPVF, LSWICLTSTTLISLIFILSFL, LVLLSFIAFIISFFSAAQDTI, GIYILGYRVGMLLASSGAIYL, AIYKIFAGVIFVYLILLILVA, FNYFKNFISAYLLKIFSGFYF, DINLAYYIILILIFLVLYRLP, VCKFCGVMGAIIGGLIGGIIM, ILYSILLFGIIHALSHIFFIL, ILFITIGVESITGGMTMTAYI, LSSMMGISRSIFPIISGYMVV, and FGWQNFFLFTTIITIPSLLIL.

Belongs to the major facilitator superfamily.

The protein localises to the cell inner membrane. The polypeptide is Putative transporter AmpG 1 (ampG1) (Rickettsia prowazekii (strain Madrid E)).